The primary structure comprises 511 residues: Light-independent protochlorophyllide reductase subunit B (511 aa).

Asp36 contacts [4Fe-4S] cluster. Asp299 (proton donor) is an active-site residue. Gly434–Met435 contacts substrate.

It belongs to the ChlB/BchB/BchZ family. Protochlorophyllide reductase is composed of three subunits; ChlL, ChlN and ChlB. Forms a heterotetramer of two ChlB and two ChlN subunits. The cofactor is [4Fe-4S] cluster.

It is found in the plastid. The protein localises to the chloroplast. The catalysed reaction is chlorophyllide a + oxidized 2[4Fe-4S]-[ferredoxin] + 2 ADP + 2 phosphate = protochlorophyllide a + reduced 2[4Fe-4S]-[ferredoxin] + 2 ATP + 2 H2O. The protein operates within porphyrin-containing compound metabolism; chlorophyll biosynthesis (light-independent). Its function is as follows. Component of the dark-operative protochlorophyllide reductase (DPOR) that uses Mg-ATP and reduced ferredoxin to reduce ring D of protochlorophyllide (Pchlide) to form chlorophyllide a (Chlide). This reaction is light-independent. The NB-protein (ChlN-ChlB) is the catalytic component of the complex. The polypeptide is Light-independent protochlorophyllide reductase subunit B (Huperzia lucidula (Shining clubmoss)).